The primary structure comprises 386 residues: Flap endonuclease 1 (386 aa).

An N-domain region spans residues 1-104 (MGILGLSKLI…GELAKRAERR (104 aa)). Mg(2+) is bound at residue Asp34. 2 residues coordinate DNA: Arg47 and Arg70. The Mg(2+) site is built by Asp86, Glu158, Glu160, Asp179, and Asp181. Residues 122 to 253 (EIEKFNRRLV…KRAIELINNY (132 aa)) are I-domain. DNA is bound at residue Glu158. DNA-binding residues include Gly231 and Asp233. Asp233 contacts Mg(2+). An interaction with PCNA region spans residues 336 to 344 (TQVRLDSFF). Residues 351 to 386 (PNAVHAAKRKAEEAKKSANNKKAKTSGGAARGRRPK) form a disordered region.

The protein belongs to the XPG/RAD2 endonuclease family. FEN1 subfamily. In terms of assembly, interacts with PCNA. Three molecules of FEN1 bind to one PCNA trimer with each molecule binding to one PCNA monomer. PCNA stimulates the nuclease activity without altering cleavage specificity. It depends on Mg(2+) as a cofactor. In terms of processing, phosphorylated. Phosphorylation upon DNA damage induces relocalization to the nuclear plasma.

It is found in the nucleus. It localises to the nucleolus. Its subcellular location is the nucleoplasm. The protein resides in the mitochondrion. Functionally, structure-specific nuclease with 5'-flap endonuclease and 5'-3' exonuclease activities involved in DNA replication and repair. During DNA replication, cleaves the 5'-overhanging flap structure that is generated by displacement synthesis when DNA polymerase encounters the 5'-end of a downstream Okazaki fragment. It enters the flap from the 5'-end and then tracks to cleave the flap base, leaving a nick for ligation. Also involved in the long patch base excision repair (LP-BER) pathway, by cleaving within the apurinic/apyrimidinic (AP) site-terminated flap. Acts as a genome stabilization factor that prevents flaps from equilibrating into structures that lead to duplications and deletions. Also possesses 5'-3' exonuclease activity on nicked or gapped double-stranded DNA, and exhibits RNase H activity. Also involved in replication and repair of rDNA and in repairing mitochondrial DNA. The chain is Flap endonuclease 1 from Drosophila persimilis (Fruit fly).